A 315-amino-acid polypeptide reads, in one-letter code: DNA-directed RNA polymerase subunit alpha (315 aa).

The segment at 1-228 (MLEIEKPIIE…EHFKLFMSLT (228 aa)) is alpha N-terminal domain (alpha-NTD). An alpha C-terminal domain (alpha-CTD) region spans residues 245–315 (KEKVLEMTVE…LGLCLKLNDE (71 aa)).

Belongs to the RNA polymerase alpha chain family. In terms of assembly, homodimer. The RNAP catalytic core consists of 2 alpha, 1 beta, 1 beta' and 1 omega subunit. When a sigma factor is associated with the core the holoenzyme is formed, which can initiate transcription.

It carries out the reaction RNA(n) + a ribonucleoside 5'-triphosphate = RNA(n+1) + diphosphate. In terms of biological role, DNA-dependent RNA polymerase catalyzes the transcription of DNA into RNA using the four ribonucleoside triphosphates as substrates. This Clostridium botulinum (strain Alaska E43 / Type E3) protein is DNA-directed RNA polymerase subunit alpha.